A 364-amino-acid chain; its full sequence is Methylthioribose-1-phosphate isomerase (364 aa).

Substrate is bound by residues 53-55, Arg90, and Gln200; that span reads RGA. The active-site Proton donor is Asp241. Residue 251–252 participates in substrate binding; it reads NK.

Belongs to the eIF-2B alpha/beta/delta subunits family. MtnA subfamily.

It carries out the reaction 5-(methylsulfanyl)-alpha-D-ribose 1-phosphate = 5-(methylsulfanyl)-D-ribulose 1-phosphate. It functions in the pathway amino-acid biosynthesis; L-methionine biosynthesis via salvage pathway; L-methionine from S-methyl-5-thio-alpha-D-ribose 1-phosphate: step 1/6. Its function is as follows. Catalyzes the interconversion of methylthioribose-1-phosphate (MTR-1-P) into methylthioribulose-1-phosphate (MTRu-1-P). The polypeptide is Methylthioribose-1-phosphate isomerase (Methylobacterium nodulans (strain LMG 21967 / CNCM I-2342 / ORS 2060)).